A 141-amino-acid chain; its full sequence is ATP synthase epsilon chain (141 aa).

The protein belongs to the ATPase epsilon chain family. F-type ATPases have 2 components, CF(1) - the catalytic core - and CF(0) - the membrane proton channel. CF(1) has five subunits: alpha(3), beta(3), gamma(1), delta(1), epsilon(1). CF(0) has three main subunits: a, b and c.

The protein localises to the cell inner membrane. Its function is as follows. Produces ATP from ADP in the presence of a proton gradient across the membrane. The protein is ATP synthase epsilon chain of Pseudomonas aeruginosa (strain LESB58).